The sequence spans 904 residues: Alanine--tRNA ligase (904 aa).

Residues histidine 603, histidine 607, cysteine 707, and histidine 711 each coordinate Zn(2+).

Belongs to the class-II aminoacyl-tRNA synthetase family. Zn(2+) serves as cofactor.

The protein localises to the cytoplasm. The enzyme catalyses tRNA(Ala) + L-alanine + ATP = L-alanyl-tRNA(Ala) + AMP + diphosphate. Functionally, catalyzes the attachment of alanine to tRNA(Ala) in a two-step reaction: alanine is first activated by ATP to form Ala-AMP and then transferred to the acceptor end of tRNA(Ala). Also edits incorrectly charged Ser-tRNA(Ala) and Gly-tRNA(Ala) via its editing domain. This chain is Alanine--tRNA ligase, found in Sulfurisphaera tokodaii (strain DSM 16993 / JCM 10545 / NBRC 100140 / 7) (Sulfolobus tokodaii).